Here is a 465-residue protein sequence, read N- to C-terminus: A-type ATP synthase subunit B (465 aa).

It belongs to the ATPase alpha/beta chains family. In terms of assembly, has multiple subunits with at least A(3), B(3), C, D, E, F, H, I and proteolipid K(x).

It is found in the cell membrane. Component of the A-type ATP synthase that produces ATP from ADP in the presence of a proton gradient across the membrane. The B chain is a regulatory subunit. In Thermococcus kodakarensis (strain ATCC BAA-918 / JCM 12380 / KOD1) (Pyrococcus kodakaraensis (strain KOD1)), this protein is A-type ATP synthase subunit B.